A 119-amino-acid chain; its full sequence is Methylglyoxal synthase (119 aa).

Residues 1-119 (MKIALIAHDK…ESAKLIMADI (119 aa)) form the MGS-like domain. Residues H8, K12, 34-37 (TGTT), and 54-55 (SG) contribute to the substrate site. The active-site Proton donor/acceptor is the D60. H87 serves as a coordination point for substrate.

It belongs to the methylglyoxal synthase family.

The catalysed reaction is dihydroxyacetone phosphate = methylglyoxal + phosphate. In terms of biological role, catalyzes the formation of methylglyoxal from dihydroxyacetone phosphate. This Clostridium perfringens (strain 13 / Type A) protein is Methylglyoxal synthase.